A 91-amino-acid chain; its full sequence is Soluble cytochrome b558 (91 aa).

The Cytochrome b5 heme-binding domain maps to 8-88; it reads LPVFTLEQVA…LQRYLIGTLE (81 aa). Cysteine 25 and cysteine 54 are oxidised to a cystine. Heme contacts are provided by histidine 43 and histidine 71.

In Ectothiorhodospira shaposhnikovii (Ectothiorhodospira vacuolata), this protein is Soluble cytochrome b558.